Here is a 277-residue protein sequence, read N- to C-terminus: Large ribosomal subunit protein uL2 (277 aa).

The interval 219–277 (TVRGSVMNPNDHPHGGGEGKAPVGRKAPSTPWGKPALGLKTRNKKAKSDKLIVRRRNEK) is disordered. Over residues 264-277 (AKSDKLIVRRRNEK) the composition is skewed to basic and acidic residues.

This sequence belongs to the universal ribosomal protein uL2 family. In terms of assembly, part of the 50S ribosomal subunit. Forms a bridge to the 30S subunit in the 70S ribosome.

In terms of biological role, one of the primary rRNA binding proteins. Required for association of the 30S and 50S subunits to form the 70S ribosome, for tRNA binding and peptide bond formation. It has been suggested to have peptidyltransferase activity; this is somewhat controversial. Makes several contacts with the 16S rRNA in the 70S ribosome. The protein is Large ribosomal subunit protein uL2 of Streptococcus sanguinis (strain SK36).